Here is a 327-residue protein sequence, read N- to C-terminus: 4-hydroxy-2-oxoglutarate aldolase, mitochondrial (327 aa).

Residues 1–25 (MLGPQVWSSVRQGLSRSLSRNVGVW) constitute a mitochondrion transit peptide. Residue 77-78 (SN) participates in substrate binding. The Schiff-base intermediate with substrate role is filled by Lys-196. Residues Ser-198 and Gly-222 each coordinate substrate.

The protein belongs to the DapA family. Homotetramer.

The protein localises to the mitochondrion. It catalyses the reaction (4S)-4-hydroxy-2-oxoglutarate = glyoxylate + pyruvate. It carries out the reaction (4R)-4-hydroxy-2-oxoglutarate = glyoxylate + pyruvate. Its activity is regulated as follows. Inhibited by divalent cations. Its function is as follows. Catalyzes the final step in the metabolic pathway of hydroxyproline. In Homo sapiens (Human), this protein is 4-hydroxy-2-oxoglutarate aldolase, mitochondrial (HOGA1).